Consider the following 292-residue polypeptide: MPWLQVRLAISPEQAETYEDALLEVGAVSVTFMDAEDQPIFEPELNTTPLWTHTHLLALFEADTNAELALAHLSLLTGAELPEHSAEVIEDQDWERSWMDNFQPMCFGQRLWIVPSWHAAPQPDAVNLLLDPGLAFGTGTHPTTALCLEWLDGQDLKGCNVLDFGCGSGILAIAALLLGAEQAVGTDIDVQALEASRDNAGRNNIAAERFPLYLPEDLPPQQADVLVANILAGPLVSLAPQLTTLIKTGGRLALSGILAEQGEDVAAAYAESFDLDPIANRDGWVRITGRRR.

Threonine 144, glycine 165, aspartate 187, and asparagine 229 together coordinate S-adenosyl-L-methionine.

This sequence belongs to the methyltransferase superfamily. PrmA family.

It is found in the cytoplasm. The catalysed reaction is L-lysyl-[protein] + 3 S-adenosyl-L-methionine = N(6),N(6),N(6)-trimethyl-L-lysyl-[protein] + 3 S-adenosyl-L-homocysteine + 3 H(+). Methylates ribosomal protein L11. The chain is Ribosomal protein L11 methyltransferase from Pseudomonas syringae pv. tomato (strain ATCC BAA-871 / DC3000).